Consider the following 924-residue polypeptide: Lon protease homolog 3, mitochondrial (924 aa).

The transit peptide at 1-63 (MMPKRFNTSG…PVQSLLLFRA (63 aa)) directs the protein to the mitochondrion. A Lon N-terminal domain is found at 112 to 325 (VIALPLPHKP…LTLELVKKQV (214 aa)). 447–454 (GPPGVGKT) provides a ligand contact to ATP. A Lon proteolytic domain is found at 738–922 (QTPVGVVMGL…EKIFDLAFNY (185 aa)). Residues S828 and K871 contribute to the active site.

The protein belongs to the peptidase S16 family. Homohexamer or homoheptamer. Organized in a ring with a central cavity.

The protein resides in the mitochondrion matrix. The catalysed reaction is Hydrolysis of proteins in presence of ATP.. Its function is as follows. ATP-dependent serine protease that mediates the selective degradation of misfolded, unassembled or oxidatively damaged polypeptides as well as certain short-lived regulatory proteins in the mitochondrial matrix. May also have a chaperone function in the assembly of inner membrane protein complexes. Participates in the regulation of mitochondrial gene expression and in the maintenance of the integrity of the mitochondrial genome. Binds to mitochondrial DNA in a site-specific manner. In Arabidopsis thaliana (Mouse-ear cress), this protein is Lon protease homolog 3, mitochondrial (LON3).